A 537-amino-acid chain; its full sequence is Cytochrome P450 monooxygenase ltmQ (537 aa).

A helical membrane pass occupies residues 10–30 (FPKLNFATIVISGATIIGIIF). N-linked (GlcNAc...) asparagine glycans are attached at residues Asn182, Asn188, and Asn310. Residue Cys476 participates in heme binding.

The protein belongs to the cytochrome P450 family. Heme serves as cofactor.

It is found in the membrane. The protein operates within secondary metabolite biosynthesis. Cytochrome P450 monooxygenase; part of the gene clusters that mediates the biosynthesis of lolitrems, indole-diterpene mycotoxins that are potent tremorgens in mammals, and are synthesized by clavicipitaceous fungal endophytes in association with their grass hosts. The geranylgeranyl diphosphate (GGPP) synthase ltmG is proposed to catalyze the first step in lolitrem biosynthesis. LtmG catalyzes a series of iterative condensations of isopentenyl diphosphate (IPP) with dimethylallyl diphosphate (DMAPP), geranyl diphosphate (GPP), and farnesyl diphosphate (FPP), to form GGPP. GGPP then condenses with indole-3-glycerol phosphate to form 3-geranylgeranylindole, an acyclic intermediate, to be incorporated into paxilline. Either ltmG or ltmC could be responsible for this step, as both are putative prenyl transferases. The FAD-dependent monooxygenase ltmM then catalyzes the epoxidation of the two terminal alkenes of the geranylgeranyl moiety, which is subsequently cyclized by ltmB, to paspaline. The cytochrome P450 monooxygenases ltmQ and ltmP can sequentially oxidize paspaline to terpendole E and terpendole F. Alternatively, ltmP converts paspaline to an intermediate which is oxidized by ltmQ to terpendole F. LtmF, ltmK, ltmE and ltmJ appear to be unique to the epichloe endophytes. The prenyltransferase ltmF is involved in the 27-hydroxyl-O-prenylation. The cytochrome P450 monooxygenase ltmK is required for the oxidative acetal ring formation. The multi-functional prenyltransferase ltmE is required for C20- and C21-prenylations of the indole ring of paspalanes and acts together with the cytochrome P450 monooxygenase ltmJ to yield lolitremanes by multiple oxidations and ring closures. The stereoisomer pairs of lolitriol and lolitrem N or lolitrem B and lolitrem F may be attributed to variations in the way in which ring closure can occur under the action of ltmJ. While the major product of this pathway is lolitrem B, the prenyl transferases and cytochrome P450 monooxygenases identified in this pathway have a remarkable versatility in their regio- and stereo-specificities to generate a diverse range of metabolites that are products of a metabolic grid rather than a linear pathway. This is Cytochrome P450 monooxygenase ltmQ from Epichloe festucae var. lolii (Neotyphodium lolii).